Here is a 426-residue protein sequence, read N- to C-terminus: MAPAASELKLGKKVNEGKTKEVYELPDIPGCVLMQSKDQITAGNAARKDRMEGKAAISNTTTSCVFQLLQEAGIKTAFVRKQSDTAFIAAHCEMIPIEWVCRRIATGSFLKRNPGVKEGYKFYPPKIEMFYKDDANNDPQWSEEQLIEAKFSFAGLTIGKTEVDIMARSTQAIFEILEKSWQPQNCTLVDLKIEFGVNILTKEIVLADVIDNDSWRLWPSGDRSQQKDKQSYRDLKEVTPEALQMVKRNFEWVAERVELLLKTKSQGRVVVLMGSTSDLGHCEKIKKACATFGIPCELRVTSAHKGPDETLRIKAEYEGDGIPTVFVAVAGRSNGLGPVMSGNTAYPVVNCPPLSSDWGAQDVWSSLRLPSGLGCPTTLSPEGAAQFAAQIFGLNNHLVWAKLRSNMLNTWISLKQADKKLRECTL.

Residues 1–261 (MAPAASELKL…WVAERVELLL (261 aa)) form an SAICAR synthetase region. Residues 262–426 (KTKSQGRVVV…ADKKLRECTL (165 aa)) are AIR carboxylase.

The protein in the N-terminal section; belongs to the SAICAR synthetase family. This sequence in the C-terminal section; belongs to the AIR carboxylase family. Class II subfamily. As to quaternary structure, homooctamer.

The catalysed reaction is 5-amino-1-(5-phospho-D-ribosyl)imidazole-4-carboxylate + L-aspartate + ATP = (2S)-2-[5-amino-1-(5-phospho-beta-D-ribosyl)imidazole-4-carboxamido]succinate + ADP + phosphate + 2 H(+). It catalyses the reaction 5-amino-1-(5-phospho-D-ribosyl)imidazole-4-carboxylate + H(+) = 5-amino-1-(5-phospho-beta-D-ribosyl)imidazole + CO2. It functions in the pathway purine metabolism; IMP biosynthesis via de novo pathway; 5-amino-1-(5-phospho-D-ribosyl)imidazole-4-carboxamide from 5-amino-1-(5-phospho-D-ribosyl)imidazole-4-carboxylate: step 1/2. Its pathway is purine metabolism; IMP biosynthesis via de novo pathway; 5-amino-1-(5-phospho-D-ribosyl)imidazole-4-carboxylate from 5-amino-1-(5-phospho-D-ribosyl)imidazole (carboxylase route): step 1/1. The chain is Multifunctional protein ADE2 (AIRC) from Gallus gallus (Chicken).